Reading from the N-terminus, the 1008-residue chain is Envelopment polyprotein (1008 aa).

The N-terminal stretch at 1–17 (MVRTYLLLLLLCGPATP) is a signal peptide. Residues 18-394 (FFNHLMDVTR…NWANIHCFSK (377 aa)) are Lumenal-facing. N-linked (GlcNAc...) asparagine; by host glycosylation is found at asparagine 34, asparagine 70, and asparagine 108. 8 cysteine pairs are disulfide-bonded: cysteine 138-cysteine 269, cysteine 156-cysteine 166, cysteine 206-cysteine 247, cysteine 216-cysteine 226, cysteine 233-cysteine 238, cysteine 292-cysteine 295, cysteine 299-cysteine 368, and cysteine 319-cysteine 324. Asparagine 208 carries an N-linked (GlcNAc...) asparagine; by host glycan. The chain crosses the membrane as a helical span at residues 395 to 415 (EQVLILVAVSSLCILLLASVL). Over 416 to 496 (RALKVIATFT…VRQKMFNLTR (81 aa)) the chain is Cytoplasmic. Residues 419–465 (KVIATFTWKIIKPFWWILSLLCRTCSKRLNKRAERLKESIHSLEEGL) form a golgi retention signal region. Residues 461–465 (LEEGL) form an important for correct targeting of the glycoproteins to the Golgi complex but not for heterodimerization region. Residues 497–513 (LSPVVVGMLCLACPVES) form an internal signal sequence for glycoprotein C region. Disulfide bonds link cysteine 514-cysteine 555, cysteine 527-cysteine 537, cysteine 580-cysteine 677, cysteine 595-cysteine 789, cysteine 601-cysteine 650, cysteine 607-cysteine 657, cysteine 612-cysteine 639, cysteine 643-cysteine 648, cysteine 728-cysteine 742, cysteine 758-cysteine 771, cysteine 851-cysteine 924, and cysteine 861-cysteine 864. At 514–977 (CSDSISVTAS…GWFKASWLRA (464 aa)) the chain is on the lumenal side. The segment at 601-607 (CHLMGAC) is fusion loop. The tract at residues 644-655 (GGALCQCFNMRP) is fusion loop. Residues asparagine 691 and asparagine 696 are each glycosylated (N-linked (GlcNAc...) asparagine; by host). Asparagine 912 and asparagine 949 each carry an N-linked (GlcNAc...) asparagine; by host glycan. A helical transmembrane segment spans residues 978–998 (IWAILGGTVSLIIGVVIIYMV). Residues 999–1008 (FTLCLKVKKS) lie on the Cytoplasmic side of the membrane.

The protein belongs to the phlebovirus envelope glycoprotein family. As to quaternary structure, homodimer. Heterodimer with glycoprotein C. Homotrimer (postfusion). In terms of assembly, heterodimer with glycoprotein N. Homotrimer (postfusion). Post-translationally, specific enzymatic cleavages in vivo yield mature proteins including glycoprotein C and glycoprotein N. The cytoplasmic tail is Palmitoylated. In terms of processing, glycosylated. Contains principally poly-N-acetyllactosamine glycans. Post-translationally, glycosylated. Contains principally oligomannose-type glycans that can attach to host CD209/DC-SIGN. Palmitoylated.

The protein resides in the virion membrane. It is found in the host Golgi apparatus membrane. It localises to the host endoplasmic reticulum membrane. Its function is as follows. Structural component of the virion that interacts with glycoprotein C. It shields the hydrophobic fusion loops of the glycoprotein C, preventing premature fusion. The glycoprotein protrusions are arranged on an icosahedral lattice, with T=12 triangulation. They are able to attach the virion to the host cell receptor CD209/DC-SIGN and to promote fusion of membranes with the late endosome after endocytosis of the virion. Plays a role in the packaging of ribonucleoproteins during virus assembly. Structural component of the virion that interacts with glycoprotein N. Acts as a class II fusion protein that is activated upon acidification and subsequent repositioning of the glycoprotein N. The glycoprotein protrusions are arranged on an icosahedral lattice, with T=12 triangulation. They are able to attach the virion to the host cell receptor CD209/DC-SIGN and to promote fusion of membranes with the late endosome after endocytosis of the virion. The chain is Envelopment polyprotein (GP) from Homo sapiens (Human).